Consider the following 221-residue polypeptide: Glutathione peroxidase 6 (221 aa).

The first 19 residues, 1 to 19 (MFQQFQASCLVLFFLVGFA), serve as a signal peptide directing secretion. The active site involves selenocysteine 73. Selenocysteine 73 is a non-standard amino acid (selenocysteine).

The protein belongs to the glutathione peroxidase family. As to expression, expressed in olfactory epithelium and embryos.

It localises to the secreted. The enzyme catalyses 2 glutathione + H2O2 = glutathione disulfide + 2 H2O. This chain is Glutathione peroxidase 6 (GPX6), found in Homo sapiens (Human).